The chain runs to 140 residues: CDGSH iron-sulfur domain-containing protein 2 homolog (140 aa).

Residues 1–35 (MEAIAKLIKVQLPNYLQKLPVPSSLSGFAELSPSD) lie on the Lumenal side of the membrane. A helical membrane pass occupies residues 36–59 (AIAVVFPFAVVSWLIGYSTYKFFQ). Residues 60–140 (PKAVELPPSP…GPLIVKGKAN (81 aa)) lie on the Cytoplasmic side of the membrane. Residues cysteine 104, cysteine 106, cysteine 115, and histidine 119 each contribute to the [2Fe-2S] cluster site.

It belongs to the CISD protein family. CISD2 subfamily. [2Fe-2S] cluster serves as cofactor.

It is found in the endoplasmic reticulum membrane. The protein is CDGSH iron-sulfur domain-containing protein 2 homolog of Trichoplax adhaerens (Trichoplax reptans).